The primary structure comprises 264 residues: Hydroxyethylthiazole kinase (264 aa).

M41 is a substrate binding site. Positions 117 and 163 each coordinate ATP. G190 is a substrate binding site.

This sequence belongs to the Thz kinase family. The cofactor is Mg(2+).

The catalysed reaction is 5-(2-hydroxyethyl)-4-methylthiazole + ATP = 4-methyl-5-(2-phosphooxyethyl)-thiazole + ADP + H(+). It functions in the pathway cofactor biosynthesis; thiamine diphosphate biosynthesis; 4-methyl-5-(2-phosphoethyl)-thiazole from 5-(2-hydroxyethyl)-4-methylthiazole: step 1/1. Its function is as follows. Catalyzes the phosphorylation of the hydroxyl group of 4-methyl-5-beta-hydroxyethylthiazole (THZ). In Thermoanaerobacter pseudethanolicus (strain ATCC 33223 / 39E) (Clostridium thermohydrosulfuricum), this protein is Hydroxyethylthiazole kinase.